Consider the following 302-residue polypeptide: NAD kinase 2 (302 aa).

Catalysis depends on Asp78, which acts as the Proton acceptor. NAD(+)-binding positions include 78–79 (DG), 152–153 (NE), Asp182, 193–198 (TAYSLS), and Ala217.

The protein belongs to the NAD kinase family. Requires a divalent metal cation as cofactor.

Its subcellular location is the cytoplasm. It catalyses the reaction NAD(+) + ATP = ADP + NADP(+) + H(+). Functionally, involved in the regulation of the intracellular balance of NAD and NADP, and is a key enzyme in the biosynthesis of NADP. Catalyzes specifically the phosphorylation on 2'-hydroxyl of the adenosine moiety of NAD to yield NADP. This chain is NAD kinase 2, found in Prochlorococcus marinus (strain SARG / CCMP1375 / SS120).